The primary structure comprises 867 residues: GATOR2 complex protein Mio (867 aa).

WD repeat units follow at residues 51-86 (ANESRYQYARCVAASYHSDQPIIAVGLADGKVGICN), 100-144 (RQQR…PKET), 149-188 (GVGESANSICWDRNHRTVIAGMSQKMIKLFDLRQSNATCQ), 190-228 (IQTKTVQGLSVSPNGNYLCSYVDSVITLWDPRNIKSPLR), and 231-272 (QSSK…TDNS). Low complexity predominate over residues 350–376 (PASPTSTAATPTQQQPTSSCSTNSGSS). The interval 350-378 (PASPTSTAATPTQQQPTSSCSTNSGSSLD) is disordered. A C4-type zinc finger spans residues 739-777 (LSCNFCGKSVSNALLDEPRPRSTTTSTNRLSSCPSCRKP). The Zn(2+) site is built by cysteine 741, cysteine 744, cysteine 771, cysteine 774, cysteine 784, cysteine 821, cysteine 824, histidine 826, histidine 829, histidine 832, cysteine 843, cysteine 848, and cysteine 852. The RING-type; atypical zinc-finger motif lies at 778–857 (LPRCSLCLMH…CNCRCFDMDG (80 aa)).

This sequence belongs to the WD repeat mio family. In terms of assembly, component of the GATOR complex consisting of mio, Nup44A/Seh1, Im11, Nplr3, Nplr2, Wdr24, Wdr59 and Sec13. Within the GATOR complex, probable component of the GATOR2 subcomplex which is likely composed of mio, Nup44A/Seh1, Wdr24, Wdr59 and Sec13. Interacts with Wdr24. Interacts with nucleoporin Nup44A/Seh1. The GATOR2 complex associates with unmet in the absence of S-adenosyl-L-methionine; the mio-Wdr24-Nup44A subcomplex is essential and sufficient for this interaction while Wdr59 and Sec13 are dispensable. This association acts as a nutrient sensor to inhibit mTORC1 signaling in the absence of methionine. Present in the oocyte.

The protein resides in the nucleus. It localises to the lysosome. In terms of biological role, an essential component of the GATOR subcomplex GATOR2 which functions as an activator of the amino acid-sensing branch of the mTORC1 signaling pathway. The two GATOR subcomplexes, GATOR1 and GATOR2, regulate the mTORC1 pathway in order to mediate metabolic homeostasis, female gametogenesis and the response to amino acid limitation and complete starvation. GATOR2 activates the mTORC1 signaling pathway through the inhibition of the GATOR1 subcomplex, controlling the switch to cell proliferation and growth under nutrient replete conditions and during female oocyte development. This component is required for activating mTORC1 specifically in germline cells to promote cell growth and maintain the oocyte fate. GATOR1 and GATOR2 act at different stages of oogenesis to regulate mTORC1 in order to control meiotic entry and promote oocyte growth and development. After exactly four mitotic cyst divisions, the GATOR1 complex members (Iml1, Nprl2 and Nprl3) down-regulate mTORC1 to slow cellular metabolism and promote the mitotic/meiotic transition. At later stages of oogenesis, the mio and Nup44A components of the GATOR2 complex inhibit GATOR1 and thus activate mTORC1 to promote meiotic progression, and drive oocyte growth and development. In addition to its role in the regulation of the mTORC1 complex, functions independently of mTORC1 to prevent the inappropriate accumulation of autolysosomes in germline tissues. In Drosophila melanogaster (Fruit fly), this protein is GATOR2 complex protein Mio.